Reading from the N-terminus, the 484-residue chain is UBX domain-containing protein 11 (484 aa).

Residues 1–28 are disordered; sequence MSSPLASLSKTRKVPLESESVNPGRRGI. Residues 69–147 adopt a coiled-coil conformation; sequence HDSELMASMT…IGEMERFLSD (79 aa). Residues 227–291 enclose the SEP domain; sequence LEPIPLKVYR…VSDLRNQIYP (65 aa). One can recognise a UBX domain in the interval 389–466; it reads PMPLLSMLRI…GLVPNATLLL (78 aa). Residues Ser478 and Ser482 each carry the phosphoserine modification.

Interacts with GNA12, GNA13, RND1, RND2 and RND3.

The protein localises to the cytoplasm. Its subcellular location is the cytoskeleton. Functionally, may be involved in the reorganization of actin cytoskeleton mediated by RND1, RND2 and RND3. Promotes RHOA activation mediated by GNA12 and GNA13. The polypeptide is UBX domain-containing protein 11 (Ubxn11) (Mus musculus (Mouse)).